The following is a 315-amino-acid chain: tRNA-cytidine(32) 2-sulfurtransferase (315 aa).

Residues 39 to 44 (SGGKDS) carry the PP-loop motif motif. The [4Fe-4S] cluster site is built by cysteine 114, cysteine 117, and cysteine 205.

It belongs to the TtcA family. As to quaternary structure, homodimer. Requires Mg(2+) as cofactor. [4Fe-4S] cluster serves as cofactor.

The protein resides in the cytoplasm. The enzyme catalyses cytidine(32) in tRNA + S-sulfanyl-L-cysteinyl-[cysteine desulfurase] + AH2 + ATP = 2-thiocytidine(32) in tRNA + L-cysteinyl-[cysteine desulfurase] + A + AMP + diphosphate + H(+). It functions in the pathway tRNA modification. In terms of biological role, catalyzes the ATP-dependent 2-thiolation of cytidine in position 32 of tRNA, to form 2-thiocytidine (s(2)C32). The sulfur atoms are provided by the cysteine/cysteine desulfurase (IscS) system. The protein is tRNA-cytidine(32) 2-sulfurtransferase of Ralstonia pickettii (strain 12J).